The following is a 193-amino-acid chain: NADH-quinone oxidoreductase subunit B (193 aa).

[4Fe-4S] cluster is bound by residues Cys-49, Cys-50, Cys-115, and Cys-144. Residues Phe-172–Glu-193 are disordered.

It belongs to the complex I 20 kDa subunit family. NDH-1 is composed of 14 different subunits. Subunits NuoB, C, D, E, F, and G constitute the peripheral sector of the complex. [4Fe-4S] cluster serves as cofactor.

The protein resides in the cell inner membrane. The enzyme catalyses a quinone + NADH + 5 H(+)(in) = a quinol + NAD(+) + 4 H(+)(out). In terms of biological role, NDH-1 shuttles electrons from NADH, via FMN and iron-sulfur (Fe-S) centers, to quinones in the respiratory chain. The immediate electron acceptor for the enzyme in this species is believed to be ubiquinone. Couples the redox reaction to proton translocation (for every two electrons transferred, four hydrogen ions are translocated across the cytoplasmic membrane), and thus conserves the redox energy in a proton gradient. In Akkermansia muciniphila (strain ATCC BAA-835 / DSM 22959 / JCM 33894 / BCRC 81048 / CCUG 64013 / CIP 107961 / Muc), this protein is NADH-quinone oxidoreductase subunit B.